Here is a 258-residue protein sequence, read N- to C-terminus: Snake venom serine protease CL2 (258 aa).

An N-terminal signal peptide occupies residues 1 to 18 (MVLIRVLANLLIIQLSYA). A propeptide spanning residues 19 to 24 (QKSSEL) is cleaved from the precursor. Positions 25 to 249 (VIGGDECNIN…YTDWIKSIIA (225 aa)) constitute a Peptidase S1 domain. 6 disulfides stabilise this stretch: Cys31/Cys163, Cys50/Cys66, Cys98/Cys256, Cys142/Cys210, Cys174/Cys189, and Cys200/Cys225. An N-linked (GlcNAc...) asparagine glycan is attached at Asn44. His65 serves as the catalytic Charge relay system. Asn103 is a glycosylation site (N-linked (GlcNAc...) asparagine). Asp110 functions as the Charge relay system in the catalytic mechanism. N-linked (GlcNAc...) asparagine glycosylation occurs at Asn121. Ser204 serves as the catalytic Charge relay system. Asn251 carries N-linked (GlcNAc...) asparagine glycosylation.

Belongs to the peptidase S1 family. Snake venom subfamily. In terms of assembly, monomer. As to expression, expressed by the venom gland.

Its subcellular location is the secreted. Functionally, snake venom serine protease that may act in the hemostasis system of the prey. In Trimeresurus stejnegeri (Chinese green tree viper), this protein is Snake venom serine protease CL2.